A 590-amino-acid polypeptide reads, in one-letter code: Multidrug resistance ABC transporter ATP-binding and permease protein (590 aa).

The next 6 membrane-spanning stretches (helical) occupy residues 35–55 (YLFFVIGIVAGIIGTLIQLQV), 79–99 (IALYIGSAAVSAIAAIVLGIF), 150–170 (IPQAFTSILLLVGSIIFMLQM), 176–196 (LAMIIAVPIVMLIMFPIMTFG), 261–281 (VMMLSMMLMIFGLLAYGIYLI), and 292–312 (LGMMMYLMNLIGVVPTVATFF). Positions 38–317 (FVIGIVAGII…VATFFTELAK (280 aa)) constitute an ABC transmembrane type-1 domain. In terms of domain architecture, ABC transporter spans 349-584 (LSAHHVDFAY…HPLYAKYVSE (236 aa)). Residue 382-389 (GPSGGGKS) participates in ATP binding.

The protein belongs to the ABC transporter superfamily. Multidrug exporter LmrA (TC 3.A.1.117.1) family. As to quaternary structure, homodimer.

It localises to the cell membrane. The catalysed reaction is ATP + H2O + xenobioticSide 1 = ADP + phosphate + xenobioticSide 2.. Efflux transporter for a variety of amphiphilic cationic compounds, including antibiotics. This Lactococcus lactis subsp. cremoris (strain MG1363) protein is Multidrug resistance ABC transporter ATP-binding and permease protein (lmrA).